A 484-amino-acid polypeptide reads, in one-letter code: MNLGIILPLIIYLTFVFGAAIFAYVKRTKGDFLTEYYVGNRSMTGFVLAMTTASTYASASSFVGGPGAAYKYGLGWVLLAMIQVPVVWLALGALGKKFALLSRETNALTINDLFFYRYKNKYLVWLSSLALLLAFFAAMTVQFIGGARLLETTIGISYTQALLLFALTVGIYTFIGGFRAVVLTDTIQGTVMIFGTIILLIGTIYALGGVESAVNKLTEIDPDLVTPYGPNGMLDFQFMASFWILVCFGVVGLPHTAVRCMAFKDSKALHRGMLIGTIVLSIIMLGMHLAGALGRAVIPNLTVSDQVIPTLMIKVLPPIVAGIFLAAPMSAIMSTIDAQLIQSSSIFVKDLYLSAKPEAAKNEKKVSYFSSIITLILTALLIFAALNPPDMIIWLNLFAFGGLEAAFLWVIVLGIYWDKANAYGALSSMIIGLGSYILLTQLGIKLFNFHQIVPSLVFGLIAFLVGNKLGERRIEKTQLKVTAL.

Helical transmembrane passes span 3-23 (LGII…AIFA), 45-65 (GFVL…FVGG), 74-94 (LGWV…LGAL), 124-144 (VWLS…VQFI), 162-182 (LLLF…RAVV), 190-210 (TVMI…LGGV), 238-258 (FMAS…HTAV), 273-293 (MLIG…AGAL), 307-327 (VIPT…FLAA), 366-386 (VSYF…FAAL), 397-417 (LFAF…GIYW), 424-444 (GALS…QLGI), and 446-466 (LFNF…FLVG).

Belongs to the sodium:solute symporter (SSF) (TC 2.A.21) family.

It is found in the cell inner membrane. It catalyses the reaction (R)-pantothenate(in) + Na(+)(in) = (R)-pantothenate(out) + Na(+)(out). In terms of biological role, catalyzes the sodium-dependent uptake of extracellular pantothenate. This is Sodium/pantothenate symporter (panF) from Haemophilus influenzae (strain ATCC 51907 / DSM 11121 / KW20 / Rd).